Consider the following 547-residue polypeptide: G protein-coupled receptor associated sorting protein 3 (547 aa).

Residues 1–10 (MAGTKNKTRA) are compositionally biased toward basic residues. 2 disordered regions span residues 1 to 32 (MAGT…EATG) and 80 to 102 (TLGK…STCK).

Belongs to the GPRASP family. In terms of assembly, homodimer. Highly expressed in brain. Not expressed in lung or liver. Down-regulated in brain from patients suffering from Alzheimer disease.

The protein localises to the cytoplasm. The protein resides in the nucleus. Survival and differentiation promoting protein that plays a role in the regulation of neurosynaptogenesis. Induces phosphatase PP2A activity which results in APP dephosphorylation and inhibits BACE1-mediated processing of APP. The polypeptide is G protein-coupled receptor associated sorting protein 3 (Homo sapiens (Human)).